The primary structure comprises 64 residues: Prokaryotic ubiquitin-like protein Pup (64 aa).

A disordered region spans residues M1–D37. Positions G21–Y58 are ARC ATPase binding. The stretch at A24–E52 forms a coiled coil. A Deamidated glutamine modification is found at Q64. Residue Q64 forms an Isoglutamyl lysine isopeptide (Gln-Lys) (interchain with K-? in acceptor proteins) linkage.

The protein belongs to the prokaryotic ubiquitin-like protein family. In terms of assembly, strongly interacts with the proteasome-associated ATPase ARC through a hydrophobic interface; the interacting region of Pup lies in its C-terminal half. There is one Pup binding site per ARC hexamer ring. Post-translationally, is modified by deamidation of its C-terminal glutamine to glutamate by the deamidase Dop, a prerequisite to the subsequent pupylation process.

It functions in the pathway protein degradation; proteasomal Pup-dependent pathway. Its function is as follows. Protein modifier that is covalently attached to lysine residues of substrate proteins, thereby targeting them for proteasomal degradation. The tagging system is termed pupylation. This chain is Prokaryotic ubiquitin-like protein Pup, found in Mycobacterium sp. (strain JLS).